The primary structure comprises 99 residues: Small ribosomal subunit protein uS14 (99 aa).

Belongs to the universal ribosomal protein uS14 family. In terms of assembly, part of the 30S ribosomal subunit. Contacts proteins S3 and S10.

Functionally, binds 16S rRNA, required for the assembly of 30S particles and may also be responsible for determining the conformation of the 16S rRNA at the A site. This Bacteroides fragilis (strain ATCC 25285 / DSM 2151 / CCUG 4856 / JCM 11019 / LMG 10263 / NCTC 9343 / Onslow / VPI 2553 / EN-2) protein is Small ribosomal subunit protein uS14.